Consider the following 252-residue polypeptide: Imidazole glycerol phosphate synthase subunit HisF (252 aa).

Active-site residues include Asp12 and Asp131.

It belongs to the HisA/HisF family. In terms of assembly, heterodimer of HisH and HisF.

Its subcellular location is the cytoplasm. The enzyme catalyses 5-[(5-phospho-1-deoxy-D-ribulos-1-ylimino)methylamino]-1-(5-phospho-beta-D-ribosyl)imidazole-4-carboxamide + L-glutamine = D-erythro-1-(imidazol-4-yl)glycerol 3-phosphate + 5-amino-1-(5-phospho-beta-D-ribosyl)imidazole-4-carboxamide + L-glutamate + H(+). The protein operates within amino-acid biosynthesis; L-histidine biosynthesis; L-histidine from 5-phospho-alpha-D-ribose 1-diphosphate: step 5/9. Functionally, IGPS catalyzes the conversion of PRFAR and glutamine to IGP, AICAR and glutamate. The HisF subunit catalyzes the cyclization activity that produces IGP and AICAR from PRFAR using the ammonia provided by the HisH subunit. The sequence is that of Imidazole glycerol phosphate synthase subunit HisF from Thermus thermophilus (strain ATCC 27634 / DSM 579 / HB8).